Reading from the N-terminus, the 57-residue chain is UPF0391 membrane protein XC_2938 (57 aa).

2 helical membrane passes run W4–A24 and F33–A53.

Belongs to the UPF0391 family.

It is found in the cell membrane. The protein is UPF0391 membrane protein XC_2938 of Xanthomonas campestris pv. campestris (strain 8004).